Reading from the N-terminus, the 108-residue chain is uncharacterized protein (108 aa).

Positions 1–14 (MSDSNSRLVYSTET) are enriched in polar residues. The tract at residues 1–31 (MSDSNSRLVYSTETGRIDEPKAAPVRPKGDG) is disordered. Residues 15–31 (GRIDEPKAAPVRPKGDG) are compositionally biased toward basic and acidic residues.

This sequence belongs to the SUI1 family.

This is an uncharacterized protein from Escherichia coli (strain K12).